Here is a 418-residue protein sequence, read N- to C-terminus: Gamma-glutamyl phosphate reductase (418 aa).

The protein belongs to the gamma-glutamyl phosphate reductase family.

The protein resides in the cytoplasm. The enzyme catalyses L-glutamate 5-semialdehyde + phosphate + NADP(+) = L-glutamyl 5-phosphate + NADPH + H(+). Its pathway is amino-acid biosynthesis; L-proline biosynthesis; L-glutamate 5-semialdehyde from L-glutamate: step 2/2. Functionally, catalyzes the NADPH-dependent reduction of L-glutamate 5-phosphate into L-glutamate 5-semialdehyde and phosphate. The product spontaneously undergoes cyclization to form 1-pyrroline-5-carboxylate. In Syntrophotalea carbinolica (strain DSM 2380 / NBRC 103641 / GraBd1) (Pelobacter carbinolicus), this protein is Gamma-glutamyl phosphate reductase.